A 96-amino-acid chain; its full sequence is Putative pterin-4-alpha-carbinolamine dehydratase (96 aa).

Belongs to the pterin-4-alpha-carbinolamine dehydratase family.

The enzyme catalyses (4aS,6R)-4a-hydroxy-L-erythro-5,6,7,8-tetrahydrobiopterin = (6R)-L-erythro-6,7-dihydrobiopterin + H2O. The polypeptide is Putative pterin-4-alpha-carbinolamine dehydratase (Prochlorococcus marinus (strain MIT 9303)).